We begin with the raw amino-acid sequence, 672 residues long: Beta-galactosidase GanA (672 aa).

Residue arginine 105 participates in substrate binding. Cysteine 109 lines the Zn(2+) pocket. Asparagine 143 is a binding site for substrate. The Proton donor role is filled by glutamate 144. Zn(2+) contacts are provided by cysteine 149, cysteine 151, and cysteine 154. Residue glutamate 308 is the Nucleophile of the active site. Substrate contacts are provided by residues tryptophan 316 and 356–359 (EKLH).

This sequence belongs to the glycosyl hydrolase 42 family. As to quaternary structure, homotrimer.

The enzyme catalyses Hydrolysis of terminal non-reducing beta-D-galactose residues in beta-D-galactosides.. Its activity is regulated as follows. Inhibited by zinc, cobalt and copper ions. Functionally, involved in galactan degradation. Hydrolyzes galactooligosaccharides released by the endo-beta-1,4-galactanase GanB from galactan. Degrades galactotetraose, galactotriose and galactobiose, generating galactose as the end product. It is unable to use lactose. In vitro, shows maximal activity with o-nitrophenyl-beta-D-galactopyranoside (ONPG) and p-nitrophenyl-beta-D-galactopyranoside (PNPG) as substrates, trace activity with p-nitrophenyl-alpha-L-arabinopyranoside and o-nitrophenyl-beta-D-fucopyranoside as substrates, but no activity with p-nitrophenyl-alpha-D-galactopyranoside, p-nitrophenyl-beta-D-glucopyranoside, o-nitrophenyl-beta-D-xylopyranoside, p-nitrophenyl-beta-D-mannopyranoside or p-nitrophenyl-alpha-L-arabinofuranoside as substrates. The chain is Beta-galactosidase GanA from Bacillus subtilis (strain 168).